Here is a 533-residue protein sequence, read N- to C-terminus: Probable bifunctional tRNA threonylcarbamoyladenosine biosynthesis protein (533 aa).

A kae1 region spans residues 1-329; the sequence is MTRVLGIEGT…FRPDEVPVSW (329 aa). The Fe cation site is built by His113 and His117. L-threonylcarbamoyladenylate is bound by residues 134–138, Asp166, Gly179, Glu183, and Asn262; that span reads NASGA. Residue Asp290 participates in Fe cation binding. One can recognise a Protein kinase domain in the interval 338 to 533; it reads PVPTDERRQG…REIETRGRYQ (196 aa). ATP-binding positions include 345–352 and Lys363; that span reads RQGAEAVV. The active-site Proton acceptor; for kinase activity is the Asp452.

The protein in the N-terminal section; belongs to the KAE1 / TsaD family. This sequence in the C-terminal section; belongs to the protein kinase superfamily. Tyr protein kinase family. BUD32 subfamily. As to quaternary structure, component of the KEOPS complex that consists of Kae1, Bud32, Cgi121 and Pcc1; the whole complex dimerizes. Fe(2+) serves as cofactor.

The protein resides in the cytoplasm. It catalyses the reaction L-seryl-[protein] + ATP = O-phospho-L-seryl-[protein] + ADP + H(+). The enzyme catalyses L-threonyl-[protein] + ATP = O-phospho-L-threonyl-[protein] + ADP + H(+). It carries out the reaction L-threonylcarbamoyladenylate + adenosine(37) in tRNA = N(6)-L-threonylcarbamoyladenosine(37) in tRNA + AMP + H(+). Its function is as follows. Required for the formation of a threonylcarbamoyl group on adenosine at position 37 (t(6)A37) in tRNAs that read codons beginning with adenine. Is a component of the KEOPS complex that is probably involved in the transfer of the threonylcarbamoyl moiety of threonylcarbamoyl-AMP (TC-AMP) to the N6 group of A37. The Kae1 domain likely plays a direct catalytic role in this reaction. The Bud32 domain probably displays kinase activity that regulates Kae1 function. This chain is Probable bifunctional tRNA threonylcarbamoyladenosine biosynthesis protein, found in Natronomonas pharaonis (strain ATCC 35678 / DSM 2160 / CIP 103997 / JCM 8858 / NBRC 14720 / NCIMB 2260 / Gabara) (Halobacterium pharaonis).